Here is a 401-residue protein sequence, read N- to C-terminus: Probable tRNA sulfurtransferase (401 aa).

In terms of domain architecture, THUMP spans 63–168; it reads TTAEQALSYL…EREAFLYGAR (106 aa). ATP is bound by residues 186 to 187, 211 to 212, Arg-268, Gly-290, and Gln-299; these read LL and YF.

The protein belongs to the ThiI family.

It is found in the cytoplasm. The enzyme catalyses [ThiI sulfur-carrier protein]-S-sulfanyl-L-cysteine + a uridine in tRNA + 2 reduced [2Fe-2S]-[ferredoxin] + ATP + H(+) = [ThiI sulfur-carrier protein]-L-cysteine + a 4-thiouridine in tRNA + 2 oxidized [2Fe-2S]-[ferredoxin] + AMP + diphosphate. It catalyses the reaction [ThiS sulfur-carrier protein]-C-terminal Gly-Gly-AMP + S-sulfanyl-L-cysteinyl-[cysteine desulfurase] + AH2 = [ThiS sulfur-carrier protein]-C-terminal-Gly-aminoethanethioate + L-cysteinyl-[cysteine desulfurase] + A + AMP + 2 H(+). It functions in the pathway cofactor biosynthesis; thiamine diphosphate biosynthesis. Catalyzes the ATP-dependent transfer of a sulfur to tRNA to produce 4-thiouridine in position 8 of tRNAs, which functions as a near-UV photosensor. Also catalyzes the transfer of sulfur to the sulfur carrier protein ThiS, forming ThiS-thiocarboxylate. This is a step in the synthesis of thiazole, in the thiamine biosynthesis pathway. The sulfur is donated as persulfide by IscS. The polypeptide is Probable tRNA sulfurtransferase (Treponema pallidum (strain Nichols)).